The following is a 352-amino-acid chain: B1 bradykinin receptor (352 aa).

Residues methionine 1–isoleucine 41 are Extracellular-facing. N-linked (GlcNAc...) asparagine glycosylation is found at asparagine 13 and asparagine 21. A helical transmembrane segment spans residues phenylalanine 42–leucine 62. Residues leucine 63–glutamate 72 lie on the Cytoplasmic side of the membrane. A helical transmembrane segment spans residues isoleucine 73–alanine 93. Residues glutamine 94–arginine 110 are Extracellular-facing. Cysteine 109 and cysteine 188 form a disulfide bridge. A helical transmembrane segment spans residues valine 111 to serine 131. The Cytoplasmic portion of the chain corresponds to glutamine 132–alanine 153. A helical transmembrane segment spans residues arginine 154–leucine 174. Topologically, residues arginine 175–asparagine 206 are extracellular. Asparagine 184 carries N-linked (GlcNAc...) asparagine glycosylation. The chain crosses the membrane as a helical span at residues valine 207 to serine 227. Topologically, residues leucine 228–leucine 250 are cytoplasmic. The chain crosses the membrane as a helical span at residues isoleucine 251–leucine 271. The Extracellular segment spans residues glutamate 272–glutamine 294. Residues leucine 295–glycine 315 traverse the membrane as a helical segment. The Cytoplasmic portion of the chain corresponds to arginine 316–tyrosine 326. Residue cysteine 329 is the site of S-palmitoyl cysteine attachment.

It belongs to the G-protein coupled receptor 1 family. Bradykinin receptor subfamily. BDKRB1 sub-subfamily.

The protein resides in the cell membrane. Its function is as follows. This is a receptor for bradykinin. Could be a factor in chronic pain and inflammation. The protein is B1 bradykinin receptor (BDKRB1) of Tupaia minor (Pigmy tree shrew).